The chain runs to 312 residues: Large ribosomal subunit protein uL15m (312 aa).

The tract at residues 63-89 (RIRKGRGPSSGYGKTAGRGTKGQKAHG) is disordered. A compositionally biased stretch (gly residues) spans 70-82 (PSSGYGKTAGRGT).

Belongs to the universal ribosomal protein uL15 family. As to quaternary structure, component of the mitochondrial large ribosomal subunit (mt-LSU). Mature N.crassa 74S mitochondrial ribosomes consist of a small (37S) and a large (54S) subunit. The 37S small subunit contains a 16S ribosomal RNA (16S mt-rRNA) and 32 different proteins. The 54S large subunit contains a 23S rRNA (23S mt-rRNA) and 42 different proteins.

The protein resides in the mitochondrion. Component of the mitochondrial ribosome (mitoribosome), a dedicated translation machinery responsible for the synthesis of mitochondrial genome-encoded proteins, including at least some of the essential transmembrane subunits of the mitochondrial respiratory chain. The mitoribosomes are attached to the mitochondrial inner membrane and translation products are cotranslationally integrated into the membrane. The polypeptide is Large ribosomal subunit protein uL15m (mrpl10) (Neurospora crassa (strain ATCC 24698 / 74-OR23-1A / CBS 708.71 / DSM 1257 / FGSC 987)).